We begin with the raw amino-acid sequence, 514 residues long: RNA polymerase sigma factor SigA (514 aa).

Basic residues predominate over residues 135-159 (AAKKATAKKAAAKKTTAKKTAAKKS). Residues 135–205 (AAKKATAKKA…SDDDEDDAPA (71 aa)) are disordered. The sigma-70 factor domain-2 stretch occupies residues 281–351 (LLEANLRLVV…TRAMADQART (71 aa)). Positions 305-308 (DLIQ) match the Interaction with polymerase core subunit RpoC motif. The sigma-70 factor domain-3 stretch occupies residues 360–436 (EVINKLARVQ…DSEAVVPADA (77 aa)). The tract at residues 449-502 (VLDTLSEREAGVVSMRFGLTDGQPKTLDEIGKVYGVTRERIRQIESKTMSKLRH) is sigma-70 factor domain-4. The H-T-H motif DNA-binding region spans 475 to 494 (LDEIGKVYGVTRERIRQIES).

This sequence belongs to the sigma-70 factor family. RpoD/SigA subfamily. As to quaternary structure, interacts transiently with the RNA polymerase catalytic core.

It localises to the cytoplasm. Sigma factors are initiation factors that promote the attachment of RNA polymerase to specific initiation sites and are then released. This sigma factor is the primary sigma factor during exponential growth. In Streptomyces griseus, this protein is RNA polymerase sigma factor SigA.